Consider the following 408-residue polypeptide: MKRAGRTMVERTSKFLLIVAASVCFMLILYQYVGPGLSLGAPSGRPYAEEPDLFPTPDPHYVKKYYFPVRELERELAFDMKGEDVIVFLHIQKTGGTTFGRHLVQNVRLEVPCDCRPGQKKCTCYRPNRRETWLFSRFSTGWSCGLHADWTELTNCVPGVLGRRESAPNRTPRKFYYITLLRDPVSRYLSEWRHVQRGATWKTSLHMCDGRTPTPEELPSCYEGTDWSGCTLQEFMDCPYNLANNRQVRMLADLSLVGCYNMSFIPENKRAQILLESAKKNLKDMAFFGLTEFQRKTQYLFERTFNLKFIRPFMQYNSTRAGGVEVDNDTIRRIEELNDLDMQLYDYAKDLFQQRYQYKRQLERMEQRIKNREERLLHRSNEALPKEETEEQGRLPTEDYMSHIIEKW.

The Cytoplasmic portion of the chain corresponds to 8-14 (MVERTSK). A helical; Signal-anchor for type II membrane protein transmembrane segment spans residues 15 to 35 (FLLIVAASVCFMLILYQYVGP). Residues 36-408 (GLSLGAPSGR…DYMSHIIEKW (373 aa)) lie on the Lumenal side of the membrane. 90 to 98 (HIQKTGGTT) is a 3'-phosphoadenylyl sulfate binding site. Residues 120–121 (KK), Arg-137, Trp-142, and His-147 each bind substrate. His-147 serves as the catalytic Proton acceptor. The 3'-phosphoadenylyl sulfate site is built by Arg-182 and Ser-190. The substrate site is built by His-194 and Trp-201. A glycan (N-linked (GlcNAc...) asparagine) is linked at Asn-261. 314-316 (MQY) contributes to the 3'-phosphoadenylyl sulfate binding site. N-linked (GlcNAc...) asparagine glycosylation is present at Asn-317. 320–321 (RA) is a 3'-phosphoadenylyl sulfate binding site. Asn-328 is a glycosylation site (N-linked (GlcNAc...) asparagine). The stretch at 348-382 (AKDLFQQRYQYKRQLERMEQRIKNREERLLHRSNE) forms a coiled coil. The disordered stretch occupies residues 376–396 (LLHRSNEALPKEETEEQGRLP).

This sequence belongs to the sulfotransferase 6 family. Post-translationally, N-glycosylated.

The protein resides in the membrane. The enzyme catalyses alpha-D-glucosaminyl-[heparan sulfate](n) + 3'-phosphoadenylyl sulfate = 6-sulfo-alpha-D-glucosaminyl-[heparan sulfate](n) + adenosine 3',5'-bisphosphate + H(+). Its function is as follows. 6-O-sulfation enzyme which catalyzes the transfer of sulfate from 3'-phosphoadenosine 5'-phosphosulfate (PAPS) to position 6 of the N-sulfoglucosamine residue (GlcNS) of heparan sulfate. May also play a role in limb development. This is Heparan-sulfate 6-O-sulfotransferase 1 from Gallus gallus (Chicken).